An 899-amino-acid chain; its full sequence is Inositol 1,4,5-triphosphate receptor associated 1 (899 aa).

Disordered regions lie at residues 32 to 110 (PGTH…HRHL), 164 to 286 (RRGR…PLQH), 324 to 391 (KTAR…EEPG), and 463 to 486 (AAEQ…SKSG). Residues 100 to 110 (SPHRRLSHRHL) show a composition bias toward basic residues. At Ser-106 the chain carries Phosphoserine. Positions 140–172 (SEEDKKKNLALLEEAKLVSERFLTRRGRKSRSS) are interaction with PRKG1. The span at 171–180 (SSLGDSPSAV) shows a compositional bias: polar residues. A compositionally biased stretch (low complexity) spans 181–203 (SPNLSSGASPASSRSCSLTISTS). Residues 266 to 281 (TVEKTKELTVEQKENF) show a composition bias toward basic and acidic residues. A compositionally biased stretch (polar residues) spans 333-351 (PRTTAQGSGGTVSPHSLGQ). Ser-382 carries the phosphoserine modification. Residues 521-567 (NVFVQLSLAFRNDSYTLESRINQAERERNLTEENTEKELENFKASIT) form an interaction with ITPR1 region. A coiled-coil region spans residues 534 to 632 (SYTLESRINQ…MQYVENLKRT (99 aa)). Ser-670 and Ser-683 each carry phosphoserine. 2 disordered regions span residues 695–722 (LPGQ…SSIS) and 757–818 (TSQE…DQGS). Low complexity predominate over residues 699–715 (APSSSPMPSLPALSESS). Basic and acidic residues-rich tracts occupy residues 759-770 (QETKAKAEEEAY) and 777-787 (GVKKTEELQDL). The span at 788–814 (KEEEEEEQKTESPEEPEEVEETQEDEK) shows a compositional bias: acidic residues. The chain crosses the membrane as a helical span at residues 839-859 (WQVIWMMAAVMLVLSVVLGLY). Residues 867-899 (EEADGPPGRSTCSAAQRDSWWSSGLQQELPAEQ) form a disordered region. The span at 876 to 892 (STCSAAQRDSWWSSGLQ) shows a compositional bias: polar residues.

As to quaternary structure, part of cGMP kinase signaling complex at least composed of ACTA2/alpha-actin, CNN1/calponin H1, PLN/phospholamban, PRKG1 and ITPR1. Interacts with PRKG1/cGKI-beta and ITPR1/IP3R type I. Interacts with HCN4; regulates HCN4 channel activity. Post-translationally, phosphorylated by PRKG1/cGKI. In terms of tissue distribution, highly expressed in smooth muscle such as aorta, colon and uterus. Detected in the brain, in the thalamus, in the hippocampus and myenteric plexus. Highly expressed in megakaryocytes. Down-regulated during macrophage differentiation.

The protein resides in the membrane. The protein localises to the cytoplasm. It localises to the perinuclear region. Its subcellular location is the sarcoplasmic reticulum. Functionally, plays a role as NO/PRKG1-dependent regulator of IP3-induced calcium release; its phosphorylation by PRKG1 inhibits bradykinin and IP3-induced calcium release from intracellular stores. Recruits PRKG1 to the endoplasmic reticulum and may mediate the assembly of PRKG1 and ITPR1 in a macrocomplex. Involved in PRKG1 signaling cascade leading to inhibition of platelet activation and aggregation. Also mediates NO-dependent inhibition of calcium signaling in gastrointestinal smooth muscle contributing to NO-dependent relaxation. Plays a role in the regulation of cellular excitability by regulating the hyperpolarization-activated cyclic nucleotide-gated HCN4 channel activity. The protein is Inositol 1,4,5-triphosphate receptor associated 1 (Irag1) of Mus musculus (Mouse).